Here is a 443-residue protein sequence, read N- to C-terminus: GTPase Der (443 aa).

2 consecutive EngA-type G domains span residues 3 to 167 (PVIA…PEEK) and 176 to 349 (IKIA…QSIQ). Residues 9 to 16 (GRPNVGKS), 56 to 60 (DTGGL), 119 to 122 (NKAD), 182 to 189 (GRPNVGKS), 229 to 233 (DTAGI), and 294 to 297 (NKWD) contribute to the GTP site. The region spanning 350–434 (QELTTGQLTR…PVHIKLKTDP (85 aa)) is the KH-like domain.

This sequence belongs to the TRAFAC class TrmE-Era-EngA-EngB-Septin-like GTPase superfamily. EngA (Der) GTPase family. As to quaternary structure, associates with the 50S ribosomal subunit.

Its function is as follows. GTPase that plays an essential role in the late steps of ribosome biogenesis. The chain is GTPase Der from Coxiella burnetii (strain CbuK_Q154) (Coxiella burnetii (strain Q154)).